We begin with the raw amino-acid sequence, 337 residues long: Phenylpyruvate C(3)-methyltransferase (337 aa).

It belongs to the methyltransferase superfamily.

It carries out the reaction 3-phenylpyruvate + S-adenosyl-L-methionine = (3S)-2-oxo-3-phenylbutanoate + S-adenosyl-L-homocysteine + H(+). It participates in antibiotic biosynthesis. Functionally, S-adenosyl-L-methionine-dependent methyltransferase involved in synthesis of the nonproteinogenic amino acid (2S,3S)-beta-methyl-phenylalanine, a building block of the antibiotic mannopeptimycin. The polypeptide is Phenylpyruvate C(3)-methyltransferase (mppJ) (Streptomyces hygroscopicus).